We begin with the raw amino-acid sequence, 659 residues long: Exoribonuclease 2 (659 aa).

The 344-residue stretch at 189-532 (REDLTHLYFT…HRLIKQVLSN (344 aa)) folds into the RNB domain. In terms of domain architecture, S1 motif spans 576–658 (NVEFDGEIQD…ETRSVVGDVL (83 aa)).

It belongs to the RNR ribonuclease family. RNase II subfamily.

The protein localises to the cytoplasm. The catalysed reaction is Exonucleolytic cleavage in the 3'- to 5'-direction to yield nucleoside 5'-phosphates.. Its function is as follows. Involved in mRNA degradation. Hydrolyzes single-stranded polyribonucleotides processively in the 3' to 5' direction. This Glaesserella parasuis serovar 5 (strain SH0165) (Haemophilus parasuis) protein is Exoribonuclease 2.